Here is a 195-residue protein sequence, read N- to C-terminus: MAYGTRYPTLAFHTGGIGESDDGMPPQPFETFCYDSALLQAKIENFNIVPYTSVLPKELFGNIVPVDTCVKSFKHGAVLEVIMAGRGAALSDGTHAIATGIGICWGKDKNGELIGGWAAEYVEFFPTWINDEIAETHAKMWLKKSLQHELDLRSIAKHSEFQFFHNYINIKQKFGFCLTALGFLNFENAEPAKVN.

Serine 53 is modified (pyruvic acid (Ser)).

This sequence belongs to the pyruvoyl-dependent arginine decarboxylase family. In terms of assembly, trimer of an alpha-beta dimer. Requires pyruvate as cofactor.

It localises to the cytoplasm. It catalyses the reaction L-arginine + H(+) = agmatine + CO2. With respect to regulation, inhibited by argininamide. Its function is as follows. Part of the AaxABC system, catalyzes the decarboxylation of L-arginine. The arginine uptake by the bacterium in the macrophage may be a virulence factor against the host innate immune response. In Chlamydia pneumoniae (Chlamydophila pneumoniae), this protein is Pyruvoyl-dependent arginine decarboxylase AaxB (aaxB).